Reading from the N-terminus, the 160-residue chain is Major pollen allergen Bet v 1-E (160 aa).

Positions 55, 82, 84, and 101 each coordinate brassinolide.

It belongs to the BetVI family.

It is found in the cytoplasm. May be a general steroid carrier protein. This Betula pendula (European white birch) protein is Major pollen allergen Bet v 1-E (BETV1E).